The chain runs to 355 residues: UDP-galactose translocator 1 (355 aa).

The tract at residues 1 to 36 (MKFQNVHISHQDEDKEKLLPNDKDVEKADESPSSSR) is disordered. Residues 9–30 (SHQDEDKEKLLPNDKDVEKADE) are compositionally biased toward basic and acidic residues. 6 helical membrane-spanning segments follow: residues 40–60 (VFKC…TLTI), 177–197 (WMAI…NVSA), 211–231 (IVGL…GVYF), 282–302 (VWAV…VMRY), 309–329 (SMAS…IFPD), and 330–350 (IFIG…VLLY).

The protein belongs to the nucleotide-sugar transporter family. SLC35A subfamily.

The protein localises to the membrane. Its subcellular location is the cytoplasmic granule membrane. This chain is UDP-galactose translocator 1 (ugtp-1), found in Caenorhabditis elegans.